The sequence spans 84 residues: Toxin BmKaTx13 (84 aa).

Positions Met-1 to Ser-19 are cleaved as a signal peptide. The region spanning Arg-21–His-83 is the LCN-type CS-alpha/beta domain. Intrachain disulfides connect Cys-31/Cys-82, Cys-35/Cys-55, Cys-41/Cys-65, and Cys-45/Cys-67. A propeptide (removed by a carboxypeptidase) is located at residue Arg-84.

The protein belongs to the long (4 C-C) scorpion toxin superfamily. Sodium channel inhibitor family. Alpha subfamily. As to expression, expressed by the venom gland.

It is found in the secreted. Functionally, alpha toxins bind voltage-independently at site-3 of sodium channels (Nav) and inhibit the inactivation of the activated channels, thereby blocking neuronal transmission. This toxin is active against mammals. This is Toxin BmKaTx13 from Olivierus martensii (Manchurian scorpion).